A 658-amino-acid polypeptide reads, in one-letter code: Probable methyl-accepting chemotaxis protein BT9727_0469 (658 aa).

Topologically, residues 1–14 are cytoplasmic; sequence MLQGKLRRSSLKAK. A helical membrane pass occupies residues 15–35; it reads LLVSFVIVLILPSIVIGWTSY. Residues 36 to 283 are Extracellular-facing; sequence QQAKTNFNET…ANPIFYKTLT (248 aa). Residues 44–109 are a coiled coil; it reads ETILQSAEDN…NKLHPEIEAI (66 aa). Residues 150–221 enclose the Cache domain; sequence ITAPYKSSTT…AHPTMKPGDK (72 aa). Residues 284 to 304 traverse the membrane as a helical segment; the sequence is VIGISLIIGGVLIYFIIASII. An HAMP domain is found at 301–353; the sequence is ASIISPLKQLVISSKKISEGDLTETITVHSKDEIGQLGESFNEMAASLHHVIS. Topologically, residues 305–658 are cytoplasmic; that stretch reads SPLKQLVISS…LQEMIGKFKV (354 aa). Residue Glu368 is modified to Glutamate methyl ester (Glu). The Methyl-accepting transducer domain occupies 372-622; that stretch reads SMKQTSEATE…ENAASVQNIA (251 aa). Residue Gln592 is modified to Deamidated glutamine. At Gln592 the chain carries Glutamate methyl ester (Gln). Glutamate methyl ester (Glu) occurs at positions 627 and 634.

Belongs to the methyl-accepting chemotaxis (MCP) protein family.

The protein resides in the cell membrane. Its function is as follows. Chemotactic-signal transducers respond to changes in the concentration of attractants and repellents in the environment, transduce a signal from the outside to the inside of the cell, and facilitate sensory adaptation through the variation of the level of methylation. The sequence is that of Probable methyl-accepting chemotaxis protein BT9727_0469 from Bacillus thuringiensis subsp. konkukian (strain 97-27).